A 756-amino-acid chain; its full sequence is MASVHESLYFNPMMTNGVVHANVFGIKDWVTPYKMALLVLLSELGRAGSQLDQLERRRLNRLLLPLLQGPDMPLSRLRKAIEECCPNLAGSVHIRLKLIAEGELKDMEQFFDDLSDSFSGTEPEVHKTSVIGLFLRHMILAYNKLSFSQVYKLYTALQQYFLNDEKKCGIDENDMELTNTEELDGKMEKEELDVPLREEEISCSGPLSQKQAEYFLSQQASLLKNDETKALSPVSLQKELNNLLKFNPDFAEAHYLSYLNSLRVHDVFSSTHSLLHYFDRLILTGAESKSNGDEGYGRSLRYAALNLAALHCRFGHYQQAELALQEAIRIAQESNDHVCLQHCLSWLHISEQKIFDSCVLLEHSVNKSLHFGLPYLASLGIQSLVQQRAFAGKAANKLMDALKDSDLLHWKHSLSELIDISIAQKTAIWRLYGRSTMALQQAQTLLSMNSLEAVNVGVQQNNTEAFAVVLCHLAELHAEQGYFAAASEILKHLKERFPPNSQHAQLWMLFDQKIQFERAMNDGRYHIADSLVAGITALNSIEGMYRKAIVLKAQNQMLEAHKLLQKLLIHCQEIKNTEIVISVLLSVAELYWRSSCHTIALPVLLQALAFSREYSLQYLASETVLNLAFSQLILGVPEQVLNILHMAIEPGLAHGAVLDKGCAMFLVAKCQVASTASYSQQKKAEALESAILNLNEAKTYLAKVDCKEQLRDVLYFQARLFHTLGKTQERNKCAMLFRQLHQELPAHGVPLINAFK.

4 TPR repeats span residues 301-334 (RYAA…AQES), 522-555 (DGRY…KAQN), 581-614 (ISVL…SREY), and 678-711 (YSQQ…EQLR).

The protein belongs to the APC5 family. In terms of assembly, the APC/C is composed of at least 12 subunits.

It localises to the nucleus. Its subcellular location is the cytoplasm. It is found in the cytoskeleton. The protein localises to the spindle. It functions in the pathway protein modification; protein ubiquitination. Its function is as follows. Component of the anaphase promoting complex/cyclosome (APC/C), a cell cycle-regulated E3 ubiquitin ligase that controls progression through mitosis and the G1 phase of the cell cycle. The APC/C complex acts by mediating ubiquitination and subsequent degradation of target proteins: it mainly mediates the formation of 'Lys-11'-linked polyubiquitin chains and, to a lower extent, the formation of 'Lys-48'- and 'Lys-63'-linked polyubiquitin chains. The APC/C complex catalyzes assembly of branched 'Lys-11'-/'Lys-48'-linked branched ubiquitin chains on target proteins. The chain is Anaphase-promoting complex subunit 5 (ANAPC5) from Gallus gallus (Chicken).